Reading from the N-terminus, the 292-residue chain is ATP synthase gamma chain (292 aa).

Belongs to the ATPase gamma chain family. As to quaternary structure, F-type ATPases have 2 components, CF(1) - the catalytic core - and CF(0) - the membrane proton channel. CF(1) has five subunits: alpha(3), beta(3), gamma(1), delta(1), epsilon(1). CF(0) has three main subunits: a, b and c.

It is found in the cell membrane. Functionally, produces ATP from ADP in the presence of a proton gradient across the membrane. The gamma chain is believed to be important in regulating ATPase activity and the flow of protons through the CF(0) complex. This chain is ATP synthase gamma chain, found in Streptococcus pneumoniae serotype 2 (strain D39 / NCTC 7466).